We begin with the raw amino-acid sequence, 651 residues long: Peptide-N(4)-(N-acetyl-beta-glucosaminyl)asparagine amidase (651 aa).

A PUB domain is found at 29-90 (EASRLLLTYA…EGETHMVFPK (62 aa)). Zn(2+)-binding residues include cysteine 246, cysteine 249, cysteine 279, and cysteine 282. The active-site Nucleophile is cysteine 305. Catalysis depends on residues histidine 332 and aspartate 349. The PAW domain occupies 450–651 (EFGGRTSGSM…LEMIIKLADL (202 aa)).

Belongs to the transglutaminase-like superfamily. PNGase family. Zn(2+) serves as cofactor.

The protein resides in the cytoplasm. The enzyme catalyses Hydrolysis of an N(4)-(acetyl-beta-D-glucosaminyl)asparagine residue in which the glucosamine residue may be further glycosylated, to yield a (substituted) N-acetyl-beta-D-glucosaminylamine and a peptide containing an aspartate residue.. Specifically deglycosylates the denatured form of N-linked glycoproteins in the cytoplasm and assists their proteasome-mediated degradation. Cleaves the beta-aspartyl-glucosamine (GlcNAc) of the glycan and the amide side chain of Asn, converting Asn to Asp. Prefers proteins containing high-mannose over those bearing complex type oligosaccharides. Can recognize misfolded proteins in the endoplasmic reticulum that are exported to the cytosol to be destroyed and deglycosylate them, while it has no activity toward native proteins. Deglycosylation is a prerequisite for subsequent proteasome-mediated degradation of some, but not all, misfolded glycoproteins. The chain is Peptide-N(4)-(N-acetyl-beta-glucosaminyl)asparagine amidase (NGLY1) from Gallus gallus (Chicken).